A 458-amino-acid chain; its full sequence is Lysine-rich nucleolar protein 1 (458 aa).

The span at 1–14 (MITKTHKVDLGLPE) shows a compositional bias: basic and acidic residues. Positions 1–21 (MITKTHKVDLGLPEKKKKKKV) are disordered. K7 participates in a covalent cross-link: Glycyl lysine isopeptide (Lys-Gly) (interchain with G-Cter in SUMO2). 2 positions are modified to phosphoserine: S42 and S50. Positions 46–305 (ATSPSKSVAH…ESGVAGDPWK (260 aa)) are disordered. A compositionally biased stretch (basic residues) spans 64–73 (VKKKKKKKKG). K101 participates in a covalent cross-link: Glycyl lysine isopeptide (Lys-Gly) (interchain with G-Cter in SUMO2). S111 is modified (phosphoserine). A Glycyl lysine isopeptide (Lys-Gly) (interchain with G-Cter in SUMO2) cross-link involves residue K130. The residue at position 132 (S132) is a Phosphoserine. A compositionally biased stretch (basic residues) spans 145–155 (GKKLKKHKKEK). The segment covering 173-192 (EAREARDVGDTCSVGKKDEE) has biased composition (basic and acidic residues). The segment covering 198 to 218 (QKRKRKSPREHNGKVKKKKKI) has biased composition (basic residues). K249 is covalently cross-linked (Glycyl lysine isopeptide (Lys-Gly) (interchain with G-Cter in SUMO1); alternate). A Glycyl lysine isopeptide (Lys-Gly) (interchain with G-Cter in SUMO2); alternate cross-link involves residue K249. S265 carries the post-translational modification Phosphoserine. The span at 265–274 (SAKKKMKSKK) shows a compositional bias: basic residues. Residues K275, K287, and K305 each participate in a glycyl lysine isopeptide (Lys-Gly) (interchain with G-Cter in SUMO2) cross-link. Residues 306–458 (EETDTDLEVV…NASKSVKLED (153 aa)) form an interaction with ZNF106 region. A phosphothreonine mark is found at T308 and T310. Residues K319, K353, K373, K375, and K407 each participate in a glycyl lysine isopeptide (Lys-Gly) (interchain with G-Cter in SUMO2) cross-link. Residues 336–353 (QEEIDRESGKTEASETRK) are compositionally biased toward basic and acidic residues. Positions 336–355 (QEEIDRESGKTEASETRKWT) are disordered. An Omega-N-methylarginine modification is found at R430. Residue K442 forms a Glycyl lysine isopeptide (Lys-Gly) (interchain with G-Cter in SUMO2) linkage.

In terms of assembly, interacts with ZNF106.

It is found in the nucleus. The protein localises to the nucleolus. The chain is Lysine-rich nucleolar protein 1 (KNOP1) from Homo sapiens (Human).